A 124-amino-acid polypeptide reads, in one-letter code: Large-conductance mechanosensitive channel (124 aa).

Helical transmembrane passes span 15–35 (MDLA…NSLV) and 67–87 (GSFL…FFLI).

Belongs to the MscL family. Homopentamer.

It localises to the cell membrane. Functionally, channel that opens in response to stretch forces in the membrane lipid bilayer. May participate in the regulation of osmotic pressure changes within the cell. This chain is Large-conductance mechanosensitive channel, found in Lactobacillus johnsonii (strain CNCM I-12250 / La1 / NCC 533).